The primary structure comprises 157 residues: uncharacterized protein (157 aa).

Residues Leu9–Asn147 form the N-acetyltransferase domain.

This is an uncharacterized protein from Bacillus cereus (strain 03BB102).